The sequence spans 335 residues: Pregnancy-specific beta-1-glycoprotein 11 (335 aa).

An N-terminal signal peptide occupies residues 1 to 34 (MGPLSAPPCTEHIKWKGLLLTALLLNFWNLPTTA). In terms of domain architecture, Ig-like V-type spans 35-144 (QVMIEAQPPK…TGYFTFTLYL (110 aa)). 3 N-linked (GlcNAc...) asparagine glycosylation sites follow: asparagine 61, asparagine 104, and asparagine 111. The Cell attachment site motif lies at 127-129 (RGD). 2 Ig-like C2-type domains span residues 147 to 234 (PKPS…VTLN) and 242 to 317 (PRIF…TSLT). Disulfide bonds link cysteine 169–cysteine 217 and cysteine 261–cysteine 301.

This sequence belongs to the immunoglobulin superfamily. CEA family.

It is found in the secreted. The chain is Pregnancy-specific beta-1-glycoprotein 11 (PSG11) from Homo sapiens (Human).